The chain runs to 505 residues: Aspartyl/glutamyl-tRNA(Asn/Gln) amidotransferase subunit B (505 aa).

Belongs to the GatB/GatE family. GatB subfamily. Heterotrimer of A, B and C subunits.

It carries out the reaction L-glutamyl-tRNA(Gln) + L-glutamine + ATP + H2O = L-glutaminyl-tRNA(Gln) + L-glutamate + ADP + phosphate + H(+). It catalyses the reaction L-aspartyl-tRNA(Asn) + L-glutamine + ATP + H2O = L-asparaginyl-tRNA(Asn) + L-glutamate + ADP + phosphate + 2 H(+). Allows the formation of correctly charged Asn-tRNA(Asn) or Gln-tRNA(Gln) through the transamidation of misacylated Asp-tRNA(Asn) or Glu-tRNA(Gln) in organisms which lack either or both of asparaginyl-tRNA or glutaminyl-tRNA synthetases. The reaction takes place in the presence of glutamine and ATP through an activated phospho-Asp-tRNA(Asn) or phospho-Glu-tRNA(Gln). This chain is Aspartyl/glutamyl-tRNA(Asn/Gln) amidotransferase subunit B, found in Haloarcula marismortui (strain ATCC 43049 / DSM 3752 / JCM 8966 / VKM B-1809) (Halobacterium marismortui).